The chain runs to 252 residues: Flagellar L-ring protein (252 aa).

A signal peptide spans 1–25 (MLKLASLNRIVLTGTLLAAAGLASG). Cysteine 26 carries N-palmitoyl cysteine lipidation. Cysteine 26 is lipidated: S-diacylglycerol cysteine.

The protein belongs to the FlgH family. The basal body constitutes a major portion of the flagellar organelle and consists of four rings (L,P,S, and M) mounted on a central rod.

The protein localises to the cell outer membrane. The protein resides in the bacterial flagellum basal body. Assembles around the rod to form the L-ring and probably protects the motor/basal body from shearing forces during rotation. The protein is Flagellar L-ring protein of Nitrobacter winogradskyi (strain ATCC 25391 / DSM 10237 / CIP 104748 / NCIMB 11846 / Nb-255).